A 216-amino-acid chain; its full sequence is UPF0502 protein Ent638_1581 (216 aa).

It belongs to the UPF0502 family.

This Enterobacter sp. (strain 638) protein is UPF0502 protein Ent638_1581.